Reading from the N-terminus, the 389-residue chain is GTPase Obg (389 aa).

The Obg domain occupies 1-159; that stretch reads MKFVDEAKIL…REVLLELMLL (159 aa). The region spanning 160–333 is the OBG-type G domain; it reads ADVGMLGMPN…LCWDIMEFLK (174 aa). GTP-binding positions include 166 to 173, 191 to 195, 213 to 216, 283 to 286, and 314 to 316; these read GMPNAGKS, FTTLV, DIPG, NKVD, and AAI. Residues serine 173 and threonine 193 each contribute to the Mg(2+) site. Positions 362–389 are disordered; that stretch reads QLENPDLEDDDEDWDEEDDDGVEFIYQR. A compositionally biased stretch (acidic residues) spans 364 to 383; that stretch reads ENPDLEDDDEDWDEEDDDGV.

This sequence belongs to the TRAFAC class OBG-HflX-like GTPase superfamily. OBG GTPase family. In terms of assembly, monomer. It depends on Mg(2+) as a cofactor.

It localises to the cytoplasm. Its function is as follows. An essential GTPase which binds GTP, GDP and possibly (p)ppGpp with moderate affinity, with high nucleotide exchange rates and a fairly low GTP hydrolysis rate. Plays a role in control of the cell cycle, stress response, ribosome biogenesis and in those bacteria that undergo differentiation, in morphogenesis control. This is GTPase Obg from Proteus mirabilis (strain HI4320).